The sequence spans 84 residues: uncharacterized protein (84 aa).

A cysteine motif region spans residues 8 to 47 (CECCDRDLPPDSGDAMICTFECTFCAGCAETKLGGTCPNC).

This is an uncharacterized protein from Rhizobium meliloti (strain 1021) (Ensifer meliloti).